Reading from the N-terminus, the 279-residue chain is Probable ribosomal RNA small subunit methyltransferase A (279 aa).

S-adenosyl-L-methionine-binding residues include Asn-23, Leu-25, Gly-50, Glu-71, Asp-95, and Asn-110.

This sequence belongs to the class I-like SAM-binding methyltransferase superfamily. rRNA adenine N(6)-methyltransferase family. RsmA subfamily.

It is found in the cytoplasm. In terms of biological role, specifically dimethylates two adjacent adenosines in the loop of a conserved hairpin near the 3'-end of 16S rRNA in the 30S particle. May play a critical role in biogenesis of 30S subunits. This is Probable ribosomal RNA small subunit methyltransferase A from Thermococcus kodakarensis (strain ATCC BAA-918 / JCM 12380 / KOD1) (Pyrococcus kodakaraensis (strain KOD1)).